Consider the following 330-residue polypeptide: MEGAPLGPLALRLLLFVALPASGWLTTGAPEPPPLSGAPQDGIRINVTTLKDDGDISKQQVVLNITYESGQVYVNDLPVNSGVTRISCQTLIVKNENLENLEEKEYFGIVSVRILVHEWPMTSGSSLQLIVIQEEVVEIDGKQVQQKDVTEIDILVKNWGVLRHSNYTLPLEESMLHSISRDSDILFTLPNLSKKESVSSLQTTSQYLIRNVETTVDEDVLPGKLPETPLRAEPPSSYKVMCQWMEKFRKDLCRFWSSVFPVFFQFLNIMVVGITGAAVVITILKVLFPVSEYKGILQLDKVDVIPVTAINLYPDGPEKTAENLEDKTCI.

Residues 1 to 23 (MEGAPLGPLALRLLLFVALPASG) form the signal peptide. The Extracellular portion of the chain corresponds to 24–268 (WLTTGAPEPP…VFPVFFQFLN (245 aa)). 4 N-linked (GlcNAc...) asparagine glycosylation sites follow: Asn46, Asn64, Asn166, and Asn191. The chain crosses the membrane as a helical span at residues 269 to 289 (IMVVGITGAAVVITILKVLFP). Residues 290 to 330 (VSEYKGILQLDKVDVIPVTAINLYPDGPEKTAENLEDKTCI) lie on the Cytoplasmic side of the membrane.

The protein resides in the membrane. This is Glycoprotein integral membrane protein 1 (GINM1) from Pongo abelii (Sumatran orangutan).